A 768-amino-acid polypeptide reads, in one-letter code: MAGCPKGSWKPRLRSVVLGAAQLIWLSALISELVNRKKVATWTYNYSTKAYSWNNSRAFCKRHFTDLVAIQNKNEIAHLNDVIPYVNSYYWIGIRKINNKWTWVGTNKTLTAEAENWADNEPNNKRNNQDCVEIYIKSNSAPGKWNDEPCFKRKRALCYTASCQDMSCNSQGERIETIGSYTCSCYPGFYGPECEYVQECGKFDIPQHVLMNCSHPLGDFSFSSQCTFSCPEGYDLNGPSEMQCLASGIWTNNPPQCKAVQCQSLEAPLHGTMDCTHPLAAFAYDSSCKFECQPGYRMRGSDILHCTDSGQWSEPLPTCEAIACEPLESPLHGSMDCFPSTGAFGYNSSCTFRCTEGFVLMGNDAIHCADLGQWTAPAPVCEALQCQEFPVPSKAQVSCSDPFGPLKYQSACSFSCDEGSLLVGASVIRCLATGHWSEAPPECQAVSCTPLLSPENGTMTCIQPLGHSNYKSTCQFMCDEGFYLSGPERLDCSPSGHWTGSPPMCEAIKCPEIFAPEQGSLDCSHVHGEFSVGSTCHFSCNEEFELLGSRNVECTVSGRWSAPPPTCKGVTSLPVPSVRCPALTTPGQGTMSCRHHLESFGPNTTCYFGCKTGFTLRGANSLRCGASGQWTAVTPVCRAVKCSELHMDTAVAMNCSNPWGNFSYGSTCAFHCPEGQSLNGSARTTCGEDGHWSDAMPTCQAGTLTIQEALTYLGGALASTSGLAVGGTLLALLRKRLRKKDDGKCPLNPHSHLGTYGVFTNAAYDPTP.

The first 41 residues, 1-41, serve as a signal peptide directing secretion; sequence MAGCPKGSWKPRLRSVVLGAAQLIWLSALISELVNRKKVAT. The Extracellular segment spans residues 42 to 709; sequence WTYNYSTKAY…QAGTLTIQEA (668 aa). 3 N-linked (GlcNAc...) asparagine glycosylation sites follow: Asn-45, Asn-54, and Asn-107. In terms of domain architecture, C-type lectin spans 58–158; sequence AFCKRHFTDL…PCFKRKRALC (101 aa). Cystine bridges form between Cys-60-Cys-158, Cys-131-Cys-150, Cys-168-Cys-183, Cys-185-Cys-194, Cys-200-Cys-244, Cys-230-Cys-257, Cys-262-Cys-306, Cys-292-Cys-319, Cys-324-Cys-368, Cys-354-Cys-381, Cys-386-Cys-430, Cys-416-Cys-443, Cys-448-Cys-492, Cys-478-Cys-505, Cys-510-Cys-554, Cys-540-Cys-567, Cys-580-Cys-624, Cys-610-Cys-637, Cys-642-Cys-686, and Cys-672-Cys-699. 3 residues coordinate Ca(2+): Glu-121, Asn-123, and Asn-124. A carbohydrate is bound at residue Asn-123. Positions 133 and 146 each coordinate a carbohydrate. Asn-146 and Asp-147 together coordinate Ca(2+). The EGF-like domain occupies 159 to 195; it reads YTASCQDMSCNSQGERIETIGSYTCSCYPGFYGPECE. Sushi domains lie at 198 to 259, 260 to 321, 322 to 383, 384 to 445, 446 to 507, 508 to 569, 578 to 639, and 640 to 701; these read QECG…QCKA, VQCQ…TCEA, IACE…VCEA, LQCQ…ECQA, VSCT…MCEA, IKCP…TCKG, VRCP…VCRA, and VKCS…TCQA. The N-linked (GlcNAc...) asparagine glycan is linked to Asn-212. Asn-347 carries N-linked (GlcNAc...) asparagine glycosylation. Residue Asn-456 is glycosylated (N-linked (GlcNAc...) asparagine). N-linked (GlcNAc...) asparagine glycosylation is present at Asn-603. Residues Asn-654, Asn-661, and Asn-679 are each glycosylated (N-linked (GlcNAc...) asparagine). Residues 710–733 traverse the membrane as a helical segment; the sequence is LTYLGGALASTSGLAVGGTLLALL. Topologically, residues 734-768 are cytoplasmic; the sequence is RKRLRKKDDGKCPLNPHSHLGTYGVFTNAAYDPTP. Cys-745 carries S-palmitoyl cysteine; alternate lipidation. Residue Cys-745 is the site of S-stearoyl cysteine; alternate attachment. The short motif at 756–759 is the Endocytosis signal element; it reads YGVF. Positions 759-768 are interaction with SNX17; sequence FTNAAYDPTP.

This sequence belongs to the selectin/LECAM family. In terms of assembly, interacts with SNX17. Interacts with SELPLG/PSGL1 and PODXL2 and mediates neutrophil adhesion and leukocyte rolling. This interaction requires the sialyl-Lewis X epitope of SELPLG and PODXL2, and specific tyrosine sulfation on SELPLG. Interacts (via C-type lectin domain) with alpha-IIb/beta3 integrin ITGA2B:ITGB3 and alpha-V/beta-3 integrin ITGAV:ITGB3. Interacts with alpha5/beta1 integrin ITGA5:ITGB1 and alpha4/beta1 integrin ITGA4:ITGB. As to expression, not detected in the absence of exposure to lipopolysaccharide (LPS). Detected only after exposure to lipopolysaccharide (LPS) in the tissues examined: spleen, lung, brain, liver, heart, kidney, thymus and small intestine.

Its subcellular location is the cell membrane. Ca(2+)-dependent receptor for myeloid cells that binds to carbohydrates on neutrophils and monocytes. Mediates the interaction of activated endothelial cells or platelets with leukocytes. The ligand recognized is sialyl-Lewis X. Mediates rapid rolling of leukocyte rolling over vascular surfaces during the initial steps in inflammation through interaction with SELPLG. Mediates cell-cell interactions and cell adhesion via the interaction with integrin alpha-IIb/beta3 (ITGA2B:ITGB3) and integrin alpha-V/beta-3 (ITGAV:ITGB3). The sequence is that of P-selectin (Selp) from Rattus norvegicus (Rat).